Reading from the N-terminus, the 118-residue chain is MAIIIPKVKTNGRIKMRIRKGDIIQVISGKDKGKIGEVLRTLPNENRLIVEGVNLRTRHVKPTSGGESGRIVTKEAYLHASNVMAYSTENKVASRIEIMVDSDGNRKRRLKKTGEILA.

It belongs to the universal ribosomal protein uL24 family. As to quaternary structure, part of the 50S ribosomal subunit.

The protein resides in the plastid. It localises to the organellar chromatophore. In terms of biological role, one of two assembly initiator proteins, it binds directly to the 5'-end of the 23S rRNA, where it nucleates assembly of the 50S subunit. The chain is Large ribosomal subunit protein uL24c (rpl24) from Paulinella chromatophora.